The chain runs to 63 residues: MKATELRDKSAQQLNEQLLELLRDQFNLRMQKATGQLGQSHLLSQVKRDIARVKTVLSQQAGK.

Belongs to the universal ribosomal protein uL29 family.

The chain is Large ribosomal subunit protein uL29 from Ectopseudomonas mendocina (strain ymp) (Pseudomonas mendocina).